An 831-amino-acid chain; its full sequence is Phenylalanine--tRNA ligase beta subunit (831 aa).

The tRNA-binding domain maps to 42–157; it reads ADISGPIVVG…GFAEPGTKAD (116 aa). The 76-residue stretch at 408-483 folds into the B5 domain; the sequence is VPREPIVVRA…RNEGYENIPA (76 aa). Residues Asp461, Asp467, Glu470, and Glu471 each coordinate Mg(2+). Residues 737–830 form the FDX-ACB domain; it reads STYPVATQDV…AAERTGAVLR (94 aa).

It belongs to the phenylalanyl-tRNA synthetase beta subunit family. Type 1 subfamily. In terms of assembly, tetramer of two alpha and two beta subunits. It depends on Mg(2+) as a cofactor.

The protein resides in the cytoplasm. The enzyme catalyses tRNA(Phe) + L-phenylalanine + ATP = L-phenylalanyl-tRNA(Phe) + AMP + diphosphate + H(+). This is Phenylalanine--tRNA ligase beta subunit from Thermobifida fusca (strain YX).